The sequence spans 149 residues: 3-dehydroquinate dehydratase (149 aa).

Catalysis depends on Tyr-26, which acts as the Proton acceptor. Substrate is bound by residues Asn-77, His-83, and Asp-90. His-103 functions as the Proton donor in the catalytic mechanism. Residues 104–105 (LS) and Arg-114 contribute to the substrate site.

Belongs to the type-II 3-dehydroquinase family. In terms of assembly, homododecamer.

It catalyses the reaction 3-dehydroquinate = 3-dehydroshikimate + H2O. Its pathway is metabolic intermediate biosynthesis; chorismate biosynthesis; chorismate from D-erythrose 4-phosphate and phosphoenolpyruvate: step 3/7. In terms of biological role, catalyzes a trans-dehydration via an enolate intermediate. The sequence is that of 3-dehydroquinate dehydratase from Haemophilus influenzae (strain PittEE).